The sequence spans 185 residues: GTP cyclohydrolase 1 (185 aa).

Residues Cys76, His79, and Cys147 each contribute to the Zn(2+) site.

It belongs to the GTP cyclohydrolase I family. As to quaternary structure, toroid-shaped homodecamer, composed of two pentamers of five dimers.

It catalyses the reaction GTP + H2O = 7,8-dihydroneopterin 3'-triphosphate + formate + H(+). The protein operates within cofactor biosynthesis; 7,8-dihydroneopterin triphosphate biosynthesis; 7,8-dihydroneopterin triphosphate from GTP: step 1/1. This Clostridium perfringens (strain 13 / Type A) protein is GTP cyclohydrolase 1.